The primary structure comprises 376 residues: Mitochondrial distribution and morphology protein 34 (376 aa).

Residues 1-194 (MSFTFNWPRF…LPGIIHRLSQ (194 aa)) enclose the SMP-LTD domain. Disordered stretches follow at residues 207 to 249 (SKHP…PKIV) and 286 to 376 (SVPP…LHPS). Residues 218 to 230 (EISEPGDYGEEGE) show a composition bias toward acidic residues. The segment covering 306 to 318 (VKAKRKRTYRLGG) has biased composition (basic residues). The span at 350–362 (MDRYFRSYDDHSR) shows a compositional bias: basic and acidic residues.

It belongs to the MDM34 family. In terms of assembly, component of the ER-mitochondria encounter structure (ERMES) or MDM complex, composed of MMM1, MDM10, MDM12 and MDM34.

It is found in the mitochondrion outer membrane. Its function is as follows. Component of the ERMES/MDM complex, which serves as a molecular tether to connect the endoplasmic reticulum (ER) and mitochondria. Components of this complex are involved in the control of mitochondrial shape and protein biogenesis, and function in nonvesicular lipid trafficking between the ER and mitochondria. MDM34 is required for the interaction of the ER-resident membrane protein MMM1 and the outer mitochondrial membrane-resident beta-barrel protein MDM10. This chain is Mitochondrial distribution and morphology protein 34, found in Laccaria bicolor (strain S238N-H82 / ATCC MYA-4686) (Bicoloured deceiver).